The following is a 213-amino-acid chain: Transcriptional regulatory protein YdfI (213 aa).

One can recognise a Response regulatory domain in the interval 3-118 (KVLIVDDHLV…TLFHTMDAAI (116 aa)). Residue aspartate 54 is modified to 4-aspartylphosphate. Residues 142 to 207 (KQRNETQLTE…EAVTIAMQKG (66 aa)) form the HTH luxR-type domain. The segment at residues 166-185 (SKAIAFDLGVSERTVKSRLT) is a DNA-binding region (H-T-H motif).

In terms of processing, phosphorylated by YdfH.

It is found in the cytoplasm. Member of the two-component regulatory system YdfH/YdfI. Regulates the transcription of ydfJ by binding to its promoter region. The polypeptide is Transcriptional regulatory protein YdfI (ydfI) (Bacillus subtilis (strain 168)).